The primary structure comprises 149 residues: Calmodulin (149 aa).

Position 2 is an N-acetylalanine (alanine 2). EF-hand domains are found at residues 8 to 43 (EQIA…LGQN), 44 to 79 (PTEA…KMKD), 81 to 116 (DSEE…LGEK), and 117 to 149 (LTDE…MMAK). The Ca(2+) site is built by aspartate 21, aspartate 23, aspartate 25, cysteine 27, glutamate 32, aspartate 57, aspartate 59, asparagine 61, threonine 63, glutamate 68, aspartate 94, aspartate 96, asparagine 98, and glutamate 105. Lysine 116 carries the N6,N6,N6-trimethyllysine modification. Ca(2+) is bound by residues aspartate 130, aspartate 132, aspartate 134, glutamine 136, and glutamate 141.

It belongs to the calmodulin family.

In terms of biological role, calmodulin mediates the control of a large number of enzymes, ion channels and other proteins by Ca(2+). Among the enzymes to be stimulated by the calmodulin-Ca(2+) complex are a number of protein kinases and phosphatases. The chain is Calmodulin (CALM1) from Zea mays (Maize).